The following is a 68-amino-acid chain: Large ribosomal subunit protein bL31 (68 aa).

It belongs to the bacterial ribosomal protein bL31 family. Type A subfamily. As to quaternary structure, part of the 50S ribosomal subunit.

Binds the 23S rRNA. This is Large ribosomal subunit protein bL31 from Helicobacter hepaticus (strain ATCC 51449 / 3B1).